Consider the following 410-residue polypeptide: Cysteine desulfurase (410 aa).

Lysine 227 carries the N6-(pyridoxal phosphate)lysine modification. Cysteine 365 (cysteine persulfide intermediate) is an active-site residue.

It belongs to the class-V pyridoxal-phosphate-dependent aminotransferase family. Csd subfamily. As to quaternary structure, homodimer. Interacts with SufE and the SufBCD complex composed of SufB, SufC and SufD. The interaction with SufE is required to mediate the direct transfer of the sulfur atom from the S-sulfanylcysteine. Requires pyridoxal 5'-phosphate as cofactor.

It is found in the cytoplasm. The enzyme catalyses (sulfur carrier)-H + L-cysteine = (sulfur carrier)-SH + L-alanine. It catalyses the reaction L-selenocysteine + AH2 = hydrogenselenide + L-alanine + A + H(+). It participates in cofactor biosynthesis; iron-sulfur cluster biosynthesis. Functionally, cysteine desulfurases mobilize the sulfur from L-cysteine to yield L-alanine, an essential step in sulfur metabolism for biosynthesis of a variety of sulfur-containing biomolecules. Component of the suf operon, which is activated and required under specific conditions such as oxidative stress and iron limitation. Acts as a potent selenocysteine lyase in vitro, that mobilizes selenium from L-selenocysteine. Selenocysteine lyase activity is however unsure in vivo. This is Cysteine desulfurase from Wigglesworthia glossinidia brevipalpis.